The primary structure comprises 419 residues: Putative zinc metalloprotease M6_Spy1682 (419 aa).

His18 contacts Zn(2+). Glu19 is an active-site residue. A Zn(2+)-binding site is contributed by His22. Helical transmembrane passes span 169–191 (LITN…ILLV), 301–323 (LAWS…FSLN), 343–365 (LESV…LIPI), and 392–411 (AYIT…AVTW). The 100-residue stretch at 175–274 (GPMNNFILGI…LKTVAVKPQK (100 aa)) folds into the PDZ domain.

The protein belongs to the peptidase M50B family. It depends on Zn(2+) as a cofactor.

The protein resides in the cell membrane. This chain is Putative zinc metalloprotease M6_Spy1682, found in Streptococcus pyogenes serotype M6 (strain ATCC BAA-946 / MGAS10394).